We begin with the raw amino-acid sequence, 181 residues long: Large ribosomal subunit protein uL5 (181 aa).

It belongs to the universal ribosomal protein uL5 family. In terms of assembly, part of the 50S ribosomal subunit; part of the 5S rRNA/L5/L18/L25 subcomplex. Contacts the 5S rRNA and the P site tRNA. Forms a bridge to the 30S subunit in the 70S ribosome.

This is one of the proteins that bind and probably mediate the attachment of the 5S RNA into the large ribosomal subunit, where it forms part of the central protuberance. In the 70S ribosome it contacts protein S13 of the 30S subunit (bridge B1b), connecting the 2 subunits; this bridge is implicated in subunit movement. Contacts the P site tRNA; the 5S rRNA and some of its associated proteins might help stabilize positioning of ribosome-bound tRNAs. This is Large ribosomal subunit protein uL5 from Rickettsia canadensis (strain McKiel).